We begin with the raw amino-acid sequence, 39 residues long: Photosystem II reaction center protein J (39 aa).

A helical transmembrane segment spans residues isoleucine 7–phenylalanine 27.

It belongs to the PsbJ family. PSII is composed of 1 copy each of membrane proteins PsbA, PsbB, PsbC, PsbD, PsbE, PsbF, PsbH, PsbI, PsbJ, PsbK, PsbL, PsbM, PsbT, PsbX, PsbY, PsbZ, Psb30/Ycf12, peripheral proteins PsbO, CyanoQ (PsbQ), PsbU, PsbV and a large number of cofactors. It forms dimeric complexes.

Its subcellular location is the cellular thylakoid membrane. In terms of biological role, one of the components of the core complex of photosystem II (PSII). PSII is a light-driven water:plastoquinone oxidoreductase that uses light energy to abstract electrons from H(2)O, generating O(2) and a proton gradient subsequently used for ATP formation. It consists of a core antenna complex that captures photons, and an electron transfer chain that converts photonic excitation into a charge separation. The protein is Photosystem II reaction center protein J of Gloeothece citriformis (strain PCC 7424) (Cyanothece sp. (strain PCC 7424)).